The chain runs to 428 residues: UPF0229 protein YeaH (428 aa).

Positions 78-90 (GNDHFIQNDRIER) are enriched in basic and acidic residues. The disordered stretch occupies residues 78–111 (GNDHFIQNDRIERPQGGGGGGSGSGQGQASQDGE). A compositionally biased stretch (gly residues) spans 92–103 (QGGGGGGSGSGQ).

This sequence belongs to the UPF0229 family.

The chain is UPF0229 protein YeaH from Salmonella paratyphi C (strain RKS4594).